The sequence spans 205 residues: Octanoyltransferase (205 aa).

The 176-residue stretch at 30-205 folds into the BPL/LPL catalytic domain; that stretch reads NSSDELVWLL…ILKKEFYKIF (176 aa). Residues 68–75, 140–142, and 153–155 contribute to the substrate site; these read RGGKYTYH, AFG, and GIA. Catalysis depends on Cys-171, which acts as the Acyl-thioester intermediate.

This sequence belongs to the LipB family.

It localises to the cytoplasm. The catalysed reaction is octanoyl-[ACP] + L-lysyl-[protein] = N(6)-octanoyl-L-lysyl-[protein] + holo-[ACP] + H(+). The protein operates within protein modification; protein lipoylation via endogenous pathway; protein N(6)-(lipoyl)lysine from octanoyl-[acyl-carrier-protein]: step 1/2. Catalyzes the transfer of endogenously produced octanoic acid from octanoyl-acyl-carrier-protein onto the lipoyl domains of lipoate-dependent enzymes. Lipoyl-ACP can also act as a substrate although octanoyl-ACP is likely to be the physiological substrate. In Wolbachia sp. subsp. Brugia malayi (strain TRS), this protein is Octanoyltransferase.